The following is a 258-amino-acid chain: Phosphate import ATP-binding protein PstB 2 (258 aa).

The 242-residue stretch at 12–253 (IQVRDLNFYY…PRQKQTEDYI (242 aa)) folds into the ABC transporter domain. 44 to 51 (GPSGCGKS) is an ATP binding site.

It belongs to the ABC transporter superfamily. Phosphate importer (TC 3.A.1.7) family. The complex is composed of two ATP-binding proteins (PstB), two transmembrane proteins (PstC and PstA) and a solute-binding protein (PstS).

The protein localises to the cell inner membrane. It catalyses the reaction phosphate(out) + ATP + H2O = ADP + 2 phosphate(in) + H(+). In terms of biological role, part of the ABC transporter complex PstSACB involved in phosphate import. Responsible for energy coupling to the transport system. In Pectobacterium atrosepticum (strain SCRI 1043 / ATCC BAA-672) (Erwinia carotovora subsp. atroseptica), this protein is Phosphate import ATP-binding protein PstB 2.